Here is a 269-residue protein sequence, read N- to C-terminus: MPGIETIKSSWADEVELDYGGLPPTTETIENGHKYVTEYKYNKDDKKTKVVRTYKITKQVVPKTVAKRRTWAKFGESKNDKPGPNSQTTMVSEDIIMQFINSKEDEKANDPLLDPSKNIAKCRICNGEHWSVNCPYKGTAMDTNLMEKKAAAAASAAVDAPKSGKYVPPFLKDSQKGGMGIRGRDDTAAIRISNLSESMTEADLEELVKKIGPQSKMYLARDKNTGLCKGFAYVHFKQRKDAAAAIEILNGHGYDHLILSVEWSKPQNT.

Positions 188-266 (AAIRISNLSE…LILSVEWSKP (79 aa)) constitute an RRM domain.

This sequence belongs to the eIF-3 subunit G family. Component of the eukaryotic translation initiation factor 3 (eIF-3) complex. The eIF-3 complex interacts with pix.

Its subcellular location is the cytoplasm. In terms of biological role, RNA-binding component of the eukaryotic translation initiation factor 3 (eIF-3) complex, which is involved in protein synthesis of a specialized repertoire of mRNAs and, together with other initiation factors, stimulates binding of mRNA and methionyl-tRNAi to the 40S ribosome. The eIF-3 complex specifically targets and initiates translation of a subset of mRNAs involved in cell proliferation. This subunit can bind 18S rRNA. The sequence is that of Eukaryotic translation initiation factor 3 subunit G-1 from Drosophila grimshawi (Hawaiian fruit fly).